Reading from the N-terminus, the 137-residue chain is Ribosome-binding factor A (137 aa).

A disordered region spans residues 110–137 (RIQQEKEGATDDRDQNDSGEDATPHSND). The segment covering 112–125 (QQEKEGATDDRDQN) has biased composition (basic and acidic residues).

It belongs to the RbfA family. As to quaternary structure, monomer. Binds 30S ribosomal subunits, but not 50S ribosomal subunits or 70S ribosomes.

It is found in the cytoplasm. In terms of biological role, one of several proteins that assist in the late maturation steps of the functional core of the 30S ribosomal subunit. Associates with free 30S ribosomal subunits (but not with 30S subunits that are part of 70S ribosomes or polysomes). Required for efficient processing of 16S rRNA. May interact with the 5'-terminal helix region of 16S rRNA. This is Ribosome-binding factor A from Rhodopirellula baltica (strain DSM 10527 / NCIMB 13988 / SH1).